Here is a 612-residue protein sequence, read N- to C-terminus: MIVDNSKDFDLKSFLANLTTHSGVYRMLDKHGEIIYVGKAKNLKNRVNSYFSKGAKDSKTLMMVEQIARIEITITPSDYEAYLLENNLIKQHRPKYNILFKDDKSYPYLVISRDKFPRVSFYRGKSAYKKGQCFGPYVSISSVKNTLNTIQKIFPIRQCENSYYKSRVRPCLQYQIKRCLAPCVGLVSQQQYDEQLAILKKFLAGKFSSVLEEISAKMYQASEDMEYEKAQVYRDQLVVLRKLQQQQIVDIQEDKTFDVIGIYMQDSYASIALLQIQNGDVVADRHWSIDAKGQDKTSIMHAFLSHFYLGDEIRNIWPKNIILSKVEFADITDLMNSISQKIGQAINWIIAPAADNLKWLKLAEVNARQKLNIYTSSKSQYQKRLESLKEFLELEKDIKRIECFDISHFQGEATIASCVVYTDDGEDRKSHRRYNIKDIKSGDDYAAIHQAVSRRVSSGLEADNLPDVMIIDGGKGQIHQAEAVFREYGIQDKVQIVSLGKGVERISGKEKIYKGFDDTEYTLDEHNPGFLLLRQVRDSAHDHAIKGQRKKVSANRQSSIIEEIEGVGPKRRKALMMYFGGWQELSRASVDEIAKVKGISKKLAQEIWECFH.

The GIY-YIG domain occupies 20 to 98; the sequence is THSGVYRMLD…IKQHRPKYNI (79 aa). The UVR domain maps to 208–243; sequence SSVLEEISAKMYQASEDMEYEKAQVYRDQLVVLRKL.

The protein belongs to the UvrC family. In terms of assembly, interacts with UvrB in an incision complex.

It localises to the cytoplasm. In terms of biological role, the UvrABC repair system catalyzes the recognition and processing of DNA lesions. UvrC both incises the 5' and 3' sides of the lesion. The N-terminal half is responsible for the 3' incision and the C-terminal half is responsible for the 5' incision. In Francisella tularensis subsp. tularensis (strain WY96-3418), this protein is UvrABC system protein C.